Consider the following 69-residue polypeptide: uncharacterized protein (69 aa).

This is an uncharacterized protein from Bacillus subtilis (strain 168).